A 114-amino-acid chain; its full sequence is Large ribosomal subunit protein P2 (114 aa).

Residues 76–91 (PAAAAAAGGGDSSSAA) show a composition bias toward low complexity. The tract at residues 76–114 (PAAAAAAGGGDSSSAAKETKKEEPEEEEEDGDMGLSLFD) is disordered.

The protein belongs to the eukaryotic ribosomal protein P1/P2 family. In terms of assembly, P1 and P2 exist as dimers at the large ribosomal subunit. In terms of processing, phosphorylated.

Functionally, plays an important role in the elongation step of protein synthesis. The polypeptide is Large ribosomal subunit protein P2 (Eimeria tenella (Coccidian parasite)).